The primary structure comprises 62 residues: Potassium channel toxin kappa-KTx 1.4 (62 aa).

Residues 1 to 26 form the signal peptide; the sequence is MKSCLINVSLLILLLLPILGYASVNA. Positions 27-38 are excised as a propeptide; the sequence is ESIDGENDFEEE. 2 cysteine pairs are disulfide-bonded: C43–C61 and C47–C57.

Belongs to the short scorpion toxin superfamily. Potassium channel inhibitor kappa-KTx family. Kappa-KTx 1 subfamily. Expressed by the venom gland.

It is found in the secreted. Shows structural homology with WaTx suggesting that it acts as a cell-penetrating peptide (CPP) with defensive purpose that induces pain by specifically activating mammalian sensory neuron TRPA1 channels. Has no effect on the voltage-gated potassium channels tested. The protein is Potassium channel toxin kappa-KTx 1.4 of Heterometrus petersii (Asian forest scorpion).